The primary structure comprises 376 residues: Peroxisomal membrane protein PEX27 (376 aa).

As to quaternary structure, homooligomer. Interacts with PEX25 and PEX34.

It localises to the peroxisome membrane. Functionally, required for regulation of peroxisome size and number. Also promotes peroxisome division and biogenesis. This is Peroxisomal membrane protein PEX27 (PEX27) from Saccharomyces cerevisiae (strain ATCC 204508 / S288c) (Baker's yeast).